Here is a 305-residue protein sequence, read N- to C-terminus: Ferrochelatase (305 aa).

Residues histidine 182 and glutamate 262 each contribute to the Fe cation site.

It belongs to the ferrochelatase family.

The protein resides in the cytoplasm. It carries out the reaction heme b + 2 H(+) = protoporphyrin IX + Fe(2+). The protein operates within porphyrin-containing compound metabolism; protoheme biosynthesis; protoheme from protoporphyrin-IX: step 1/1. Its function is as follows. Catalyzes the ferrous insertion into protoporphyrin IX. The sequence is that of Ferrochelatase from Herpetosiphon aurantiacus (strain ATCC 23779 / DSM 785 / 114-95).